The primary structure comprises 142 residues: Large ribosomal subunit protein bL17 (142 aa).

Belongs to the bacterial ribosomal protein bL17 family. Part of the 50S ribosomal subunit. Contacts protein L32.

The polypeptide is Large ribosomal subunit protein bL17 (Chlamydia abortus (strain DSM 27085 / S26/3) (Chlamydophila abortus)).